The following is a 161-amino-acid chain: N5-carboxyaminoimidazole ribonucleotide mutase (161 aa).

Serine 9, aspartate 12, and arginine 39 together coordinate substrate.

This sequence belongs to the AIR carboxylase family. Class I subfamily.

The enzyme catalyses 5-carboxyamino-1-(5-phospho-D-ribosyl)imidazole + H(+) = 5-amino-1-(5-phospho-D-ribosyl)imidazole-4-carboxylate. It participates in purine metabolism; IMP biosynthesis via de novo pathway; 5-amino-1-(5-phospho-D-ribosyl)imidazole-4-carboxylate from 5-amino-1-(5-phospho-D-ribosyl)imidazole (N5-CAIR route): step 2/2. Functionally, catalyzes the conversion of N5-carboxyaminoimidazole ribonucleotide (N5-CAIR) to 4-carboxy-5-aminoimidazole ribonucleotide (CAIR). This chain is N5-carboxyaminoimidazole ribonucleotide mutase, found in Vibrio cholerae serotype O1 (strain ATCC 39315 / El Tor Inaba N16961).